Reading from the N-terminus, the 218-residue chain is Ras-related protein Rab11D (218 aa).

A GTP-binding site is contributed by 20–27; sequence GDSGVGKS. The Effector region motif lies at 42–50; it reads SKSTIGVEF. Residues 68–72 and 126–129 each bind GTP; these read DTAGQ and NKSD. S-geranylgeranyl cysteine attachment occurs at residues Cys-215 and Cys-216.

It belongs to the small GTPase superfamily. Rab family.

It localises to the cell membrane. This Lotus japonicus (Lotus corniculatus var. japonicus) protein is Ras-related protein Rab11D (RAB11D).